A 226-amino-acid chain; its full sequence is Small ribosomal subunit protein uS2c (226 aa).

This sequence belongs to the universal ribosomal protein uS2 family.

It is found in the plastid. The protein localises to the chloroplast. The chain is Small ribosomal subunit protein uS2c (rps2) from Ostreococcus tauri.